Consider the following 468-residue polypeptide: Glutamate--tRNA ligase (468 aa).

L-glutamate is bound at residue 5 to 7; it reads RIA. The 'HIGH' region motif lies at 8 to 18; it reads PSPTGDPHVGT. H15 lines the ATP pocket. Residues E41, 187 to 191, and R205 each bind L-glutamate; that span reads YHLAN. ATP-binding positions include E208, L236, 243–247, and K246; that span reads KISKR. The short motif at 243 to 247 is the 'KMSKS' region element; it reads KISKR. The segment at 432–447 is interaction with tRNA; the sequence is QPLRAALTGSLETPGL.

Belongs to the class-I aminoacyl-tRNA synthetase family. Glutamate--tRNA ligase type 1 subfamily. Monomer.

It is found in the cytoplasm. The catalysed reaction is tRNA(Glu) + L-glutamate + ATP = L-glutamyl-tRNA(Glu) + AMP + diphosphate. In the absence of bound tRNA, ATP is bound in a non-productive mode, and the enzyme cannot activate amino acids. Catalyzes the attachment of glutamate to tRNA(Glu) in a two-step reaction: glutamate is first activated by ATP to form Glu-AMP and then transferred to the acceptor end of tRNA(Glu). In Thermus thermophilus (strain ATCC 27634 / DSM 579 / HB8), this protein is Glutamate--tRNA ligase.